A 429-amino-acid polypeptide reads, in one-letter code: Glucose-1-phosphate adenylyltransferase (429 aa).

Residues Gly162, 177-178, and Ser209 contribute to the alpha-D-glucose 1-phosphate site; that span reads EK.

This sequence belongs to the bacterial/plant glucose-1-phosphate adenylyltransferase family. In terms of assembly, homotetramer.

It catalyses the reaction alpha-D-glucose 1-phosphate + ATP + H(+) = ADP-alpha-D-glucose + diphosphate. It functions in the pathway glycan biosynthesis; glycogen biosynthesis. Its function is as follows. Involved in the biosynthesis of ADP-glucose, a building block required for the elongation reactions to produce glycogen. Catalyzes the reaction between ATP and alpha-D-glucose 1-phosphate (G1P) to produce pyrophosphate and ADP-Glc. This chain is Glucose-1-phosphate adenylyltransferase, found in Trichormus variabilis (strain ATCC 29413 / PCC 7937) (Anabaena variabilis).